Here is a 125-residue protein sequence, read N- to C-terminus: MAVCIIDHDNIRGVIYFEPVHGKDKVLGSVIGLKSGTYNLIIHRYGDISRGCDSIGSPEIFIGNIFVNRYGVAYVYLDTDVNISTIIGKALSISKNNQRLACGVIGISYINEKIIHFLTINENGV.

Residues Cys-52 and Cys-102 are joined by a disulfide bond.

The protein belongs to the Cu-Zn superoxide dismutase family.

The protein localises to the host cytoplasm. Virion protein with no enzymatic activity. The protein is Cu-Zn superoxide dismutase-like protein of Camelpox virus (strain M-96).